A 276-amino-acid chain; its full sequence is UPF0328 protein ECU03_0010 (276 aa).

Disordered stretches follow at residues 1-132 and 156-176; these read MAAP…PIIS and SFCQ…NMVH. Over residues 106–126 the composition is skewed to basic and acidic residues; sequence HTEGCHTHEANPEPNTKHTET.

The protein belongs to the UPF0328 family.

The sequence is that of UPF0328 protein ECU03_0010 from Encephalitozoon cuniculi (strain GB-M1) (Microsporidian parasite).